The sequence spans 833 residues: cGMP-specific 3',5'-cyclic phosphodiesterase (833 aa).

At serine 60 the chain carries Phosphoserine. Residues 82–101 are disordered; the sequence is FLSDSGKKEQMPLTSPRFDS. GAF domains are found at residues 122-272 and 304-461; these read DVTA…GIVL and SLEV…GLGI. The PDEase domain maps to 494-818; the sequence is ETRELQALAA…QKWQALADQQ (325 aa). Histidine 571 acts as the Proton donor in catalysis. Histidine 575, histidine 611, aspartate 612, and aspartate 722 together coordinate Zn(2+). A Mg(2+)-binding site is contributed by aspartate 612. Glutamine 775 provides a ligand contact to 3',5'-cyclic GMP.

It belongs to the cyclic nucleotide phosphodiesterase family. Zn(2+) is required as a cofactor. Requires Mg(2+) as cofactor. Phosphorylation is regulated by binding of cGMP to the two allosteric sites. Phosphorylation by PRKG1 leads to its activation.

It catalyses the reaction 3',5'-cyclic GMP + H2O = GMP + H(+). Its pathway is purine metabolism; 3',5'-cyclic GMP degradation; GMP from 3',5'-cyclic GMP: step 1/1. Its function is as follows. Plays a role in signal transduction by regulating the intracellular concentration of cyclic nucleotides. This phosphodiesterase catalyzes the specific hydrolysis of cGMP to 5'-GMP. Specifically regulates nitric-oxide-generated cGMP. In Rattus norvegicus (Rat), this protein is cGMP-specific 3',5'-cyclic phosphodiesterase (Pde5a).